A 370-amino-acid polypeptide reads, in one-letter code: Tyrosine-protein kinase transforming protein SEA (370 aa).

The Protein kinase domain maps to 60-323; the sequence is THRSRVIGRG…GLVCELERVL (264 aa). ATP is bound by residues 66 to 74 and K92; that span reads IGRGHFGSV. D186 (proton acceptor) is an active-site residue. Phosphotyrosine; by autocatalysis is present on Y216. The interval 345 to 370 is disordered; it reads PPFPPAPRGQLPDSEDEEDEEEEVAE. Residues 357 to 370 are compositionally biased toward acidic residues; sequence DSEDEEDEEEEVAE.

Belongs to the protein kinase superfamily. Tyr protein kinase family.

The enzyme catalyses L-tyrosyl-[protein] + ATP = O-phospho-L-tyrosyl-[protein] + ADP + H(+). This is Tyrosine-protein kinase transforming protein SEA (V-SEA) from Galliformes.